Here is a 711-residue protein sequence, read N- to C-terminus: Putative membrane protein ActII-3 (711 aa).

The next 12 helical transmembrane spans lie at 14 to 34 (LKWLVLAAWIGLLIVLQPLAG), 175 to 195 (ADFKLTLVTLLIVVTILVVTY), 199 to 219 (LLWLLPMISAGMSLVISQAIV), 235 to 255 (AMILTVLVLGAATDYALLLVA), 281 to 301 (AIVASAATVAVSMLVLLLAAL), 313 to 333 (VGVLVGLLSMMTLLPALLVIF), 369 to 389 (AVWVTTSLLLGAVATLAVTLN), 516 to 536 (IIPVILAVVFCILALLLRALV), 540 to 560 (LLIASVVLSFFTALGLAALFF), 573 to 593 (FPLWVFVFLVALGVDYNIFLV), 623 to 643 (AGLVLAGTFAALATLPLVFIA), and 645 to 665 (LGFTVAVGVLLDTMIVRSVLV). Residues 685–711 (REDPSEDPAVSGMPDSIDSEASTTASR) form a disordered region.

Belongs to the resistance-nodulation-cell division (RND) (TC 2.A.6) family. MmpL subfamily.

Its subcellular location is the cell membrane. In Streptomyces coelicolor (strain ATCC BAA-471 / A3(2) / M145), this protein is Putative membrane protein ActII-3 (actII-3).